A 138-amino-acid polypeptide reads, in one-letter code: Probable glycine cleavage system H protein 1 (138 aa).

The 83-residue stretch at Ile-30 to Lys-112 folds into the Lipoyl-binding domain. Lys-71 carries the post-translational modification N6-lipoyllysine.

It belongs to the GcvH family. As to quaternary structure, the glycine cleavage system is composed of four proteins: P, T, L and H. It depends on (R)-lipoate as a cofactor.

In terms of biological role, the glycine cleavage system catalyzes the degradation of glycine. The H protein shuttles the methylamine group of glycine from the P protein to the T protein. This chain is Probable glycine cleavage system H protein 1, found in Sulfolobus acidocaldarius (strain ATCC 33909 / DSM 639 / JCM 8929 / NBRC 15157 / NCIMB 11770).